The following is a 269-amino-acid chain: Tryptophan synthase alpha chain (269 aa).

Active-site proton acceptor residues include Glu49 and Asp60.

Belongs to the TrpA family. Tetramer of two alpha and two beta chains.

The catalysed reaction is (1S,2R)-1-C-(indol-3-yl)glycerol 3-phosphate + L-serine = D-glyceraldehyde 3-phosphate + L-tryptophan + H2O. Its pathway is amino-acid biosynthesis; L-tryptophan biosynthesis; L-tryptophan from chorismate: step 5/5. Its function is as follows. The alpha subunit is responsible for the aldol cleavage of indoleglycerol phosphate to indole and glyceraldehyde 3-phosphate. The protein is Tryptophan synthase alpha chain of Pseudomonas fluorescens (strain SBW25).